The chain runs to 1295 residues: Phosphoribosylformylglycinamidine synthase (1295 aa).

Residues 305 to 327 are disordered; the sequence is WPGAATGSGGEIRDEGATGRGAK. ATP contacts are provided by residues 307-318, 386-388, and alanine 678; these read GAATGSGGEIRD and TGY. The Mg(2+) site is built by aspartate 679, glutamate 718, asparagine 722, and aspartate 884. ATP is bound at residue serine 886. The Glutamine amidotransferase type-1 domain maps to 1042–1295; it reads VAVLREQGVN…IFRNARKQLG (254 aa). The active-site Nucleophile is cysteine 1135. Active-site residues include histidine 1260 and glutamate 1262.

It in the N-terminal section; belongs to the FGAMS family. Monomer.

It is found in the cytoplasm. It carries out the reaction N(2)-formyl-N(1)-(5-phospho-beta-D-ribosyl)glycinamide + L-glutamine + ATP + H2O = 2-formamido-N(1)-(5-O-phospho-beta-D-ribosyl)acetamidine + L-glutamate + ADP + phosphate + H(+). It participates in purine metabolism; IMP biosynthesis via de novo pathway; 5-amino-1-(5-phospho-D-ribosyl)imidazole from N(2)-formyl-N(1)-(5-phospho-D-ribosyl)glycinamide: step 1/2. In terms of biological role, phosphoribosylformylglycinamidine synthase involved in the purines biosynthetic pathway. Catalyzes the ATP-dependent conversion of formylglycinamide ribonucleotide (FGAR) and glutamine to yield formylglycinamidine ribonucleotide (FGAM) and glutamate. The protein is Phosphoribosylformylglycinamidine synthase of Salmonella typhimurium (strain LT2 / SGSC1412 / ATCC 700720).